The chain runs to 250 residues: DNA repair protein RecO (250 aa).

It belongs to the RecO family.

Its function is as follows. Involved in DNA repair and RecF pathway recombination. This chain is DNA repair protein RecO, found in Staphylococcus haemolyticus (strain JCSC1435).